The primary structure comprises 475 residues: Beta-amyrin 28-monooxygenase (475 aa).

The chain crosses the membrane as a helical span at residues 2-22; sequence YLTILFLFVSSILLSLMFLLR. Heme is bound at residue Cys-422.

Belongs to the cytochrome P450 family. Requires heme as cofactor.

The protein resides in the membrane. It catalyses the reaction beta-amyrin + 3 reduced [NADPH--hemoprotein reductase] + 3 O2 = oleanolate + 3 oxidized [NADPH--hemoprotein reductase] + 4 H2O + 4 H(+). Functionally, catalyzes the oxidation of the methyl group to a carboxyl group at the C-28 position of beta-amyrin to form oleanolate. In Barbarea vulgaris (Yellow rocket), this protein is Beta-amyrin 28-monooxygenase.